A 461-amino-acid chain; its full sequence is Anthranilate synthase component 1 (461 aa).

L-tryptophan-binding positions include Ser43 and 238 to 240 (PYM). 273 to 274 (GT) contacts chorismate. Residue Glu300 coordinates Mg(2+). Chorismate contacts are provided by residues Tyr388, Arg408, 422–424 (GAG), and Gly424. Glu437 lines the Mg(2+) pocket.

It belongs to the anthranilate synthase component I family. In terms of assembly, heterotetramer consisting of two non-identical subunits: a beta subunit (TrpG) and a large alpha subunit (TrpE). Mg(2+) serves as cofactor.

It carries out the reaction chorismate + L-glutamine = anthranilate + pyruvate + L-glutamate + H(+). It participates in amino-acid biosynthesis; L-tryptophan biosynthesis; L-tryptophan from chorismate: step 1/5. With respect to regulation, feedback inhibited by tryptophan. Its function is as follows. Part of a heterotetrameric complex that catalyzes the two-step biosynthesis of anthranilate, an intermediate in the biosynthesis of L-tryptophan. In the first step, the glutamine-binding beta subunit (TrpG) of anthranilate synthase (AS) provides the glutamine amidotransferase activity which generates ammonia as a substrate that, along with chorismate, is used in the second step, catalyzed by the large alpha subunit of AS (TrpE) to produce anthranilate. In the absence of TrpG, TrpE can synthesize anthranilate directly from chorismate and high concentrations of ammonia. This Methanothermobacter marburgensis (strain ATCC BAA-927 / DSM 2133 / JCM 14651 / NBRC 100331 / OCM 82 / Marburg) (Methanobacterium thermoautotrophicum) protein is Anthranilate synthase component 1 (trpE).